The primary structure comprises 91 residues: Putative membrane protein insertion efficiency factor (91 aa).

The protein belongs to the UPF0161 family.

Its subcellular location is the cell inner membrane. In terms of biological role, could be involved in insertion of integral membrane proteins into the membrane. The polypeptide is Putative membrane protein insertion efficiency factor (Saccharophagus degradans (strain 2-40 / ATCC 43961 / DSM 17024)).